A 196-amino-acid polypeptide reads, in one-letter code: MVKSMYAYVREAWARPDKSDVKALLWDRMQVWRREGSVTRIDRPTRIDRARALGYKAKQGIAVVRVHVRRGGRRASRYVRARRSARMGKNSSTPGKSIQRIAEERASVRYPNMEVLNSYWVGQDGKLKYYEVILVDGHHPSIQSDKNLAWLANPTHRGRAERGKTSAGRKGRGMRTRGRGTEKTRPSIRSHANQGK.

A disordered region spans residues 156–196 (HRGRAERGKTSAGRKGRGMRTRGRGTEKTRPSIRSHANQGK). The span at 167 to 178 (AGRKGRGMRTRG) shows a compositional bias: basic residues.

This sequence belongs to the eukaryotic ribosomal protein eL15 family.

The chain is Large ribosomal subunit protein eL15 from Methanoregula boonei (strain DSM 21154 / JCM 14090 / 6A8).